Consider the following 425-residue polypeptide: MQKFRVYGQSRLRGSVNISGAKNAALPILFAAILAQEPVKLTNVPELKDIETTLKILRKLGVVVERDAEGAVHLDASKIDHFVAPYELVKTMRASIWALAPLVARFHRGQVSLPGGCSIGARPVDLHISGLERLGASIILEDGYVKAYVDHCLVGTRIVMEKVSVGATLSIMMAATLAKGKTIIENAAREPEITDTALFLNKMGAKIVGAGTDTITVEGVERLGGCEHSIVPDRIETGTFLVAAAISGGRIECKNTKADTLDAVIDKLREAGAQVDVTENSITLDMLGNRPRAVNIRTAPYPGFPTDMQAQFTLLNMVACGTSIITETIFENRFMHIPELIRMGGKAEIEGNTAICHGVDHLSGAEVMATDLRASISLVLAGCIATGETIVDRIYHIDRGYERIEEKLRGLGARIERFSAQSEES.

22–23 (KN) is a phosphoenolpyruvate binding site. Arg93 is a binding site for UDP-N-acetyl-alpha-D-glucosamine. Catalysis depends on Cys117, which acts as the Proton donor. Cys117 bears the 2-(S-cysteinyl)pyruvic acid O-phosphothioketal mark. Residues 122-126 (RPVDL), 162-165 (KVSV), Asp307, and Ile329 contribute to the UDP-N-acetyl-alpha-D-glucosamine site.

It belongs to the EPSP synthase family. MurA subfamily.

The protein localises to the cytoplasm. It catalyses the reaction phosphoenolpyruvate + UDP-N-acetyl-alpha-D-glucosamine = UDP-N-acetyl-3-O-(1-carboxyvinyl)-alpha-D-glucosamine + phosphate. Its pathway is cell wall biogenesis; peptidoglycan biosynthesis. Its function is as follows. Cell wall formation. Adds enolpyruvyl to UDP-N-acetylglucosamine. This chain is UDP-N-acetylglucosamine 1-carboxyvinyltransferase, found in Pasteurella multocida (strain Pm70).